Here is a 477-residue protein sequence, read N- to C-terminus: Charged multivesicular body protein 7 (477 aa).

Coiled coils occupy residues 252 to 280 (KLQT…TIKE) and 382 to 428 (ESLS…QQQQ). Composition is skewed to basic and acidic residues over residues 411-424 (EEKQ…KEKQ) and 465-477 (KQDE…SELI). The tract at residues 411–477 (EEKQKQKQIE…ENKQKTSELI (67 aa)) is disordered.

It belongs to the SNF7 family.

It localises to the cytoplasm. Plays a role in the endosomal sorting pathway. The sequence is that of Charged multivesicular body protein 7 (chmp7) from Dictyostelium discoideum (Social amoeba).